The sequence spans 415 residues: Tyrosine--tRNA ligase (415 aa).

The 'HIGH' region signature appears at Pro54–His63. The short motif at Lys248–Ser252 is the 'KMSKS' region element. Lys251 is an ATP binding site. One can recognise an S4 RNA-binding domain in the interval Ala351–Thr415.

This sequence belongs to the class-I aminoacyl-tRNA synthetase family. TyrS type 2 subfamily. In terms of assembly, homodimer.

It localises to the cytoplasm. The enzyme catalyses tRNA(Tyr) + L-tyrosine + ATP = L-tyrosyl-tRNA(Tyr) + AMP + diphosphate + H(+). Its function is as follows. Catalyzes the attachment of tyrosine to tRNA(Tyr) in a two-step reaction: tyrosine is first activated by ATP to form Tyr-AMP and then transferred to the acceptor end of tRNA(Tyr). This Prochlorococcus marinus (strain NATL2A) protein is Tyrosine--tRNA ligase.